Here is a 302-residue protein sequence, read N- to C-terminus: Sulfate adenylyltransferase subunit 2 (302 aa).

Residues 279 to 302 are disordered; it reads ERQGRAIDHDQSGSMELKKRQGYF. Residues 280 to 302 show a composition bias toward basic and acidic residues; that stretch reads RQGRAIDHDQSGSMELKKRQGYF.

This sequence belongs to the PAPS reductase family. CysD subfamily. In terms of assembly, heterodimer composed of CysD, the smaller subunit, and CysN.

The catalysed reaction is sulfate + ATP + H(+) = adenosine 5'-phosphosulfate + diphosphate. It functions in the pathway sulfur metabolism; hydrogen sulfide biosynthesis; sulfite from sulfate: step 1/3. With CysN forms the ATP sulfurylase (ATPS) that catalyzes the adenylation of sulfate producing adenosine 5'-phosphosulfate (APS) and diphosphate, the first enzymatic step in sulfur assimilation pathway. APS synthesis involves the formation of a high-energy phosphoric-sulfuric acid anhydride bond driven by GTP hydrolysis by CysN coupled to ATP hydrolysis by CysD. The protein is Sulfate adenylyltransferase subunit 2 of Photobacterium profundum (strain SS9).